The chain runs to 107 residues: UPF0060 membrane protein glr4174 (107 aa).

4 consecutive transmembrane segments (helical) span residues 1–21, 26–46, 58–78, and 87–107; these read MALL…FAFW, LGKN…FAWL, AYAA…WLVE, and LAGA…DRSP.

This sequence belongs to the UPF0060 family.

It localises to the cell inner membrane. The sequence is that of UPF0060 membrane protein glr4174 from Gloeobacter violaceus (strain ATCC 29082 / PCC 7421).